Here is a 268-residue protein sequence, read N- to C-terminus: Undecaprenyl-diphosphatase (268 aa).

Helical transmembrane passes span 3–23, 46–66, 84–104, 107–127, 144–164, 185–205, 213–233, and 246–266; these read FFNL…EFIP, FEVL…SAKL, LGVL…HGFI, VLFE…FILL, YPLP…IPGV, AEFS…YDLF, FNDG…GVFV, and FALF…ALII.

Belongs to the UppP family.

It is found in the cell inner membrane. The enzyme catalyses di-trans,octa-cis-undecaprenyl diphosphate + H2O = di-trans,octa-cis-undecaprenyl phosphate + phosphate + H(+). Catalyzes the dephosphorylation of undecaprenyl diphosphate (UPP). Confers resistance to bacitracin. In Brucella abortus (strain S19), this protein is Undecaprenyl-diphosphatase.